The following is a 208-amino-acid chain: Ribonuclease HII (208 aa).

Residues 12–201 (ELVAGVDEVG…VRALLEPVAV (190 aa)) enclose the RNase H type-2 domain. 3 residues coordinate a divalent metal cation: Asp18, Glu19, and Asp110.

Belongs to the RNase HII family. Mn(2+) serves as cofactor. The cofactor is Mg(2+).

It is found in the cytoplasm. The catalysed reaction is Endonucleolytic cleavage to 5'-phosphomonoester.. Functionally, endonuclease that specifically degrades the RNA of RNA-DNA hybrids. In Ectopseudomonas mendocina (strain ymp) (Pseudomonas mendocina), this protein is Ribonuclease HII.